Reading from the N-terminus, the 494-residue chain is Endoglucanase 1 (494 aa).

The N-terminal stretch at 1–25 (MDCSSPLSLFHLLLVCTVMVKCCSA) is a signal peptide. The active-site Nucleophile is the Asp-82. N-linked (GlcNAc...) asparagine glycans are attached at residues Asn-254 and Asn-359. Residues His-411, Asp-462, and Glu-471 contribute to the active site.

This sequence belongs to the glycosyl hydrolase 9 (cellulase E) family.

The enzyme catalyses Endohydrolysis of (1-&gt;4)-beta-D-glucosidic linkages in cellulose, lichenin and cereal beta-D-glucans.. Involved in ripening fruit process. The protein is Endoglucanase 1 (CEL1) of Persea americana (Avocado).